Reading from the N-terminus, the 255-residue chain is MRILCTNDDGINAPGLEIIEQIAKDLSDDVWVVAPEYDQSGVSHSLSLNDPLRLREIGPRHFAVKGTPTDCVIMGSRHILGEKGPDLVLSGVNRGRNLAEDVVYSGTIAGALEGTMLGLPSFALSQEFSMETGDRPVWETARKFGPQILRKVIDVGIPKNTVVNINFPACAPEQVVGVLVTRMGKRNLGFLKIDERRDGRGNPYFWIGFEKADVVDTPAAGTDLAAIAARCVSVTPLRLDRTDDAFVEVLTATLK.

A divalent metal cation is bound by residues D8, D9, S40, and N93.

Belongs to the SurE nucleotidase family. A divalent metal cation is required as a cofactor.

The protein resides in the cytoplasm. The enzyme catalyses a ribonucleoside 5'-phosphate + H2O = a ribonucleoside + phosphate. Functionally, nucleotidase that shows phosphatase activity on nucleoside 5'-monophosphates. The polypeptide is 5'-nucleotidase SurE (Nitrobacter hamburgensis (strain DSM 10229 / NCIMB 13809 / X14)).